A 119-amino-acid polypeptide reads, in one-letter code: Large ribosomal subunit protein bL20 (119 aa).

It belongs to the bacterial ribosomal protein bL20 family.

Its function is as follows. Binds directly to 23S ribosomal RNA and is necessary for the in vitro assembly process of the 50S ribosomal subunit. It is not involved in the protein synthesizing functions of that subunit. The chain is Large ribosomal subunit protein bL20 from Nitrosospira multiformis (strain ATCC 25196 / NCIMB 11849 / C 71).